Reading from the N-terminus, the 191-residue chain is Calcium and integrin-binding protein 1 (191 aa).

Gly-2 is lipidated: N-myristoyl glycine. EF-hand domains follow at residues 103–138 and 148–183; these read TPDIKSHYAFRIFDFDDDGTLNREDLSRLVNCLTGE and EMKQLIDNILEESDIDRDGTINLSEFQHVISRSPDF. 10 residues coordinate Ca(2+): Asp-116, Asp-118, Asp-120, Thr-122, Asp-127, Asp-161, Asp-163, Asp-165, Thr-167, and Glu-172. Asp-118 carries the post-translational modification Phosphoserine.

As to quaternary structure, monomer. Interacts with MYO1C. Interacts (via C-terminal region) with PPP3R1 and CACNA1C; the interactions increase upon cardiomyocytes hypertrophy. Interacts with the heterodimeric integrin alpha-IIb/beta3 (ITGA2B-ITGB3). Interacts with ITGA2B (via cytoplasmic domain); the interaction is direct and calcium-dependent. Interacts with the protein kinases PLK2/SNK and PRKDC (via the region immediately upstream of the kinase domain). Interacts with PLK3; the interaction inhibits PLK3 kinase activity. Interacts with PSEN2. Interacts (via C-terminus) with F8. Interacts with NBR1 (via C-terminus). Interacts with FEZ1 (via C-terminus). Interacts with UBR5 (via C-terminus); the interaction is sensitive to DNA damage, and may target CIB1 for ubiquitin-mediated degradation. Interacts with IFI6; the interaction is direct. Interacts with BCL2. Interacts with ITPR3; the interaction occurs in a calcium-dependent manner. Interacts with PTK2/FAK1. Interacts with MAP3K5; the interaction inhibits MAP3K5 activation by phosphorylation, and its subsequent interaction with TRAF2. Isoform 2 interacts with PRKD2 (via N-terminal AP-rich region), PTK2/FAK1 and PAK1. Interacts with TAS1R2 (via C-terminus); the interaction is independent of the myristoylation state of CIB1. Interacts (via C-terminal region) with STMN2 (via the N-terminal region); the interaction is direct, occurs in a calcium-dependent manner and attenuates the STMN2-induced neurite outgrowth inhibition. Interacts with SPHK1, the interaction occurs in a calcium-dependent manner. Interacts with ITGA2B (via C-terminal cytoplasmic tail); the interaction occurs upon platelet aggregation and is stabilized/increased in a calcium and magnesium-dependent manner. Interacts with PAK1 (via N-terminal region); the interaction is direct and occurs in a calcium-dependent manner. Interacts with RAC3 (via C-terminal region); the interaction induces their association with the cytoskeleton upon alpha-IIb/beta3 integrin-mediated adhesion. Interacts with ITGA5 and ITGAV. Interacts and forms a complex with TMC6 and TMC8; the interaction stabilizes each component of the complex. In terms of assembly, (Microbial infection) Interacts with human papillomavirus 4/HPV4 protein E8, human papillomavirus 5/HPV5 protein E1, and human papillomavirus 16/HPV16 proteins E2 and E5. Phosphorylation of isoform 2 at Ser-118 by PRKD2 increases its ability to stimulate tumor angiogenesis. Ubiquitously expressed. Expressed in the epidermis, hair follicles and keratinocytes. Detected in platelets and in cell lines of megakaryocytic and erythrocytic lineages. Both isoform 1 and isoform 2 are detected in various cancer cell lines, with isoform 2 being the predominant form (at protein level).

It localises to the membrane. The protein resides in the cell membrane. The protein localises to the sarcolemma. It is found in the apical cell membrane. Its subcellular location is the cell projection. It localises to the ruffle membrane. The protein resides in the filopodium tip. The protein localises to the growth cone. It is found in the lamellipodium. Its subcellular location is the cytoplasm. It localises to the cytoskeleton. The protein resides in the microtubule organizing center. The protein localises to the centrosome. It is found in the perinuclear region. Its subcellular location is the nucleus. It localises to the neuron projection. The protein resides in the perikaryon. The protein localises to the golgi apparatus. It is found in the trans-Golgi network. Calcium-binding protein that plays a role in the regulation of numerous cellular processes, such as cell differentiation, cell division, cell proliferation, cell migration, thrombosis, angiogenesis, cardiac hypertrophy and apoptosis. Involved in bone marrow megakaryocyte differentiation by negatively regulating thrombopoietin-mediated signaling pathway. Participates in the endomitotic cell cycle of megakaryocyte, a form of mitosis in which both karyokinesis and cytokinesis are interrupted. Plays a role in integrin signaling by negatively regulating alpha-IIb/beta3 activation in thrombin-stimulated megakaryocytes preventing platelet aggregation. Up-regulates PTK2/FAK1 activity, and is also needed for the recruitment of PTK2/FAK1 to focal adhesions; it thus appears to play an important role in focal adhesion formation. Positively regulates cell migration on fibronectin in a CDC42-dependent manner, the effect being negatively regulated by PAK1. Functions as a negative regulator of stress activated MAP kinase (MAPK) signaling pathways. Down-regulates inositol 1,4,5-trisphosphate receptor-dependent calcium signaling. Involved in sphingosine kinase SPHK1 translocation to the plasma membrane in a N-myristoylation-dependent manner preventing TNF-alpha-induced apoptosis. Regulates serine/threonine-protein kinase PLK3 activity for proper completion of cell division progression. Plays a role in microtubule (MT) dynamics during neuronal development; disrupts the MT depolymerization activity of STMN2 attenuating NGF-induced neurite outgrowth and the MT reorganization at the edge of lamellipodia. Promotes cardiomyocyte hypertrophy via activation of the calcineurin/NFAT signaling pathway. Stimulates calcineurin PPP3R1 activity by mediating its anchoring to the sarcolemma. In ischemia-induced (pathological or adaptive) angiogenesis, stimulates endothelial cell proliferation, migration and microvessel formation by activating the PAK1 and ERK1/ERK2 signaling pathway. Also promotes cancer cell survival and proliferation. May regulate cell cycle and differentiation of spermatogenic germ cells, and/or differentiation of supporting Sertoli cells. Forms a complex with TMC6/EVER1 and TMC8/EVER2 in lymphocytes and keratynocytes where CIB1 stabilizes TMC6 and TMC8 levels and reciprocally. In terms of biological role, acts as a restriction factor that promotes keratinocyte-intrinsic immunity to human beta-papillomaviruses (HPVs). Its function is as follows. Plays a regulatory role in angiogenesis and tumor growth by mediating PKD/PRKD2-induced vascular endothelial growth factor A (VEGFA) secretion. The chain is Calcium and integrin-binding protein 1 (CIB1) from Homo sapiens (Human).